Reading from the N-terminus, the 258-residue chain is Thiazole synthase (258 aa).

K100 acts as the Schiff-base intermediate with DXP in catalysis. 1-deoxy-D-xylulose 5-phosphate is bound by residues G161, 187–188 (AG), and 209–210 (NT).

The protein belongs to the ThiG family. In terms of assembly, homotetramer. Forms heterodimers with either ThiH or ThiS.

The protein resides in the cytoplasm. The enzyme catalyses [ThiS sulfur-carrier protein]-C-terminal-Gly-aminoethanethioate + 2-iminoacetate + 1-deoxy-D-xylulose 5-phosphate = [ThiS sulfur-carrier protein]-C-terminal Gly-Gly + 2-[(2R,5Z)-2-carboxy-4-methylthiazol-5(2H)-ylidene]ethyl phosphate + 2 H2O + H(+). It functions in the pathway cofactor biosynthesis; thiamine diphosphate biosynthesis. In terms of biological role, catalyzes the rearrangement of 1-deoxy-D-xylulose 5-phosphate (DXP) to produce the thiazole phosphate moiety of thiamine. Sulfur is provided by the thiocarboxylate moiety of the carrier protein ThiS. In vitro, sulfur can be provided by H(2)S. The chain is Thiazole synthase from Campylobacter jejuni subsp. jejuni serotype O:2 (strain ATCC 700819 / NCTC 11168).